Here is a 475-residue protein sequence, read N- to C-terminus: Cytochrome P450 monooxygenase sthD (475 aa).

The N-terminal stretch at 1-17 (MAAYFLLGLYGSTLVYR) is a signal peptide. A helical transmembrane segment spans residues 276–296 (FIIIAGSDTVAATLTFAFFYL). A glycan (N-linked (GlcNAc...) asparagine) is linked at Asn336. Cys418 contributes to the heme binding site.

This sequence belongs to the cytochrome P450 family. Heme serves as cofactor.

The protein localises to the membrane. It carries out the reaction betaenone A + NADPH + O2 + H(+) = stemphyloxin II + NADP(+) + H2O. The catalysed reaction is betaenone C + NADPH + O2 + H(+) = stemphyloxin I + NADP(+) + H2O. Its pathway is mycotoxin biosynthesis. In terms of biological role, cytochrome P450 monooxygenase; part of the gene cluster that mediates the biosynthesis of the phytotoxin stemphyloxin II. The first step of the pathway is the synthesis of dehydroprobetaenone I by the polyketide synthase sthA and the enoyl reductase sthE via condensation of one acetyl-CoA starter unit with 7 malonyl-CoA units and 5 methylations. The C-terminal reductase (R) domain of sthA catalyzes the reductive release of the polyketide chain. Because sthA lacks a designated enoylreductase (ER) domain, the required activity is provided the enoyl reductase sthE. The short-chain dehydrogenase/reductase sthC then catalyzes reduction of dehydroprobetaenone I to probetaenone I. The cytochrome P450 monooxygenase sthF catalyzes successive epoxidation, oxidation (resulting from epoxide opening) and hydroxylation to install a tertiary alcohol in the decaline ring to yield betaenone C from dehydroprobetaenone I and betaenone B from probetaenone I. The FAD-linked oxidoreductase sthB is responsible for the conversion of betaenone C to betaenone A via an intramolecular aldol reaction between C-1 and C-17 to form the bridged tricyclic system in betaenone A. Finally, the cytochrome P450 monooxygenase sthD catalyzes the hydroxylation of C-15 to afford the final metabolite stemphyloxin II. This chain is Cytochrome P450 monooxygenase sthD, found in Phaeosphaeria nodorum (strain SN15 / ATCC MYA-4574 / FGSC 10173) (Glume blotch fungus).